We begin with the raw amino-acid sequence, 377 residues long: Anhydro-N-acetylmuramic acid kinase (377 aa).

18 to 25 (GTSADGID) is a binding site for ATP.

Belongs to the anhydro-N-acetylmuramic acid kinase family.

The enzyme catalyses 1,6-anhydro-N-acetyl-beta-muramate + ATP + H2O = N-acetyl-D-muramate 6-phosphate + ADP + H(+). Its pathway is amino-sugar metabolism; 1,6-anhydro-N-acetylmuramate degradation. It functions in the pathway cell wall biogenesis; peptidoglycan recycling. Functionally, catalyzes the specific phosphorylation of 1,6-anhydro-N-acetylmuramic acid (anhMurNAc) with the simultaneous cleavage of the 1,6-anhydro ring, generating MurNAc-6-P. Is required for the utilization of anhMurNAc either imported from the medium or derived from its own cell wall murein, and thus plays a role in cell wall recycling. This Xanthomonas campestris pv. campestris (strain 8004) protein is Anhydro-N-acetylmuramic acid kinase.